The sequence spans 451 residues: Ribosomal protein uS12 methylthiotransferase RimO (451 aa).

The region spanning 17 to 127 is the MTTase N-terminal domain; sequence PTIGFVSLGC…VLAQVHEHLP (111 aa). [4Fe-4S] cluster contacts are provided by cysteine 26, cysteine 62, cysteine 91, cysteine 160, cysteine 164, and cysteine 167. The Radical SAM core domain occupies 146–383; the sequence is LTPRHYAYLK…MQLQQRISTE (238 aa). The TRAM domain occupies 386 to 451; that stretch reads KQKVGQTLPV…DEYDLWGTRV (66 aa).

The protein belongs to the methylthiotransferase family. RimO subfamily. [4Fe-4S] cluster serves as cofactor.

It is found in the cytoplasm. The catalysed reaction is L-aspartate(89)-[ribosomal protein uS12]-hydrogen + (sulfur carrier)-SH + AH2 + 2 S-adenosyl-L-methionine = 3-methylsulfanyl-L-aspartate(89)-[ribosomal protein uS12]-hydrogen + (sulfur carrier)-H + 5'-deoxyadenosine + L-methionine + A + S-adenosyl-L-homocysteine + 2 H(+). Catalyzes the methylthiolation of an aspartic acid residue of ribosomal protein uS12. The polypeptide is Ribosomal protein uS12 methylthiotransferase RimO (Cellvibrio japonicus (strain Ueda107) (Pseudomonas fluorescens subsp. cellulosa)).